A 257-amino-acid chain; its full sequence is Tryptophan synthase alpha chain (257 aa).

Catalysis depends on proton acceptor residues Glu47 and Asp58.

This sequence belongs to the TrpA family. Tetramer of two alpha and two beta chains.

The enzyme catalyses (1S,2R)-1-C-(indol-3-yl)glycerol 3-phosphate + L-serine = D-glyceraldehyde 3-phosphate + L-tryptophan + H2O. The protein operates within amino-acid biosynthesis; L-tryptophan biosynthesis; L-tryptophan from chorismate: step 5/5. Functionally, the alpha subunit is responsible for the aldol cleavage of indoleglycerol phosphate to indole and glyceraldehyde 3-phosphate. The polypeptide is Tryptophan synthase alpha chain (Listeria welshimeri serovar 6b (strain ATCC 35897 / DSM 20650 / CCUG 15529 / CIP 8149 / NCTC 11857 / SLCC 5334 / V8)).